The primary structure comprises 134 residues: Histone H3-like centromeric protein A (134 aa).

Positions 1-14 (MGPRRKPQTPRRRP) are enriched in basic residues. A disordered region spans residues 1–34 (MGPRRKPQTPRRRPSSPAPGPSRQSSSVGSQTLR). Glycine 2 carries the n,N,N-trimethylglycine modification. Serine 16 and serine 22 each carry phosphoserine. The important for flexibility of DNA ends that protrude from nucleosomes stretch occupies residues 34-48 (RRRQKFMWLKEIKTL). The H3-like stretch occupies residues 35 to 134 (RRQKFMWLKE…RIRGFEGGLP (100 aa)). Residue serine 62 is modified to Phosphoserine. The segment at 69-110 (CEKFSRGVDFWWQAQALLALQEAAEAFLIHLFEDAYLLSLHA) is CATD.

The protein belongs to the histone H3 family. As to quaternary structure, component of centromeric nucleosomes, where DNA is wrapped around a histone octamer core. The octamer contains two molecules each of H2A, H2B, CENPA and H4 assembled in one CENPA-H4 heterotetramer and two H2A-H2B heterodimers. CENPA modulates the DNA-binding characteristics of nucleosomes so that protruding DNA ends have higher flexibility than in nucleosomes containing conventional histone H3. Inhibits binding of histone H1 to nucleosomes, since histone H1 binds preferentially to rigid DNA linkers that protrude from nucleosomes. Nucleosomes containing CENPA also contain histone H2A variants such as MACROH2A and H2A.Z/H2AZ1. The CENPA-H4 heterotetramer is more compact and structurally more rigid than corresponding H3-H4 heterotetramers. Can assemble into nucleosomes that contain both CENPA and histone H3.3; these nucleosomes interact with a single CENPC chain. Heterotrimer composed of HJURP, CENPA and histone H4, where HJURP interacts with the dimer formed by CENPA and histone H4 and prevents tetramerization of CENPA and H4. Component of the CENPA-NAC complex, at least composed of CENPA, CENPC, CENPH, CENPM, CENPN, CENPT and CENPU. Interacts (via CATD domain) with HJURP; the interaction is direct and is required for its localization to centromeres. Interacts with CENPC, CENPN and CENPT; interaction is direct. Part of a centromere complex consisting of CENPA, CENPT and CENPW. Identified in centromere complexes containing histones H2A, H2B and H4, and at least CENPA, CENPB, CENPC, CENPT, CENPN, HJURP, SUPT16H, SSRP1 and RSF1. Can self-associate. The CENPA-H4 heterotetramer can bind DNA by itself (in vitro). Interacts with CDK1, PPP1CA and RBBP7. Post-translationally, poly-ADP-ribosylated by PARP1. Trimethylated by NTMT1 at the N-terminal glycine after cleavage of Met-1. Methylation is low before incorporation into nucleosomes and increases with cell cycle progression, with the highest levels in mitotic nucleosomes. In terms of processing, phosphorylated by CDK1 at Ser-62 during early mitosis; this abolishes association with chromatin and centromeres, prevents interaction with HJURP and thereby prevents premature assembly of CENPA into centromeres. Dephosphorylated at Ser-62 by PPP1CA during late mitosis.

The protein localises to the nucleus. Its subcellular location is the chromosome. It localises to the centromere. Its function is as follows. Histone H3-like nucleosomal protein that is specifically found in centromeric nucleosomes. Replaces conventional H3 in the nucleosome core of centromeric chromatin that serves as an assembly site for the inner kinetochore. The presence of CENPA subtly modifies the nucleosome structure and the way DNA is wrapped around the nucleosome and gives rise to protruding DNA ends that are less well-ordered and rigid compared to nucleosomes containing histone H3. May serve as an epigenetic mark that propagates centromere identity through replication and cell division. Required for recruitment and assembly of kinetochore proteins, and as a consequence required for progress through mitosis, chromosome segregation and cytokinesis. This Mus musculus (Mouse) protein is Histone H3-like centromeric protein A (Cenpa).